A 231-amino-acid chain; its full sequence is Eukaryotic translation initiation factor 4E-1 (231 aa).

The segment at 1 to 55 (MVVEDTQKSSITDDQITANPNNENEDLEEGEILDDDDSSATSRPPSSSGALARNP) is disordered. Residues 8–18 (KSSITDDQITA) show a composition bias toward polar residues. Residues 23 to 38 (ENEDLEEGEILDDDDS) show a composition bias toward acidic residues. Over residues 39–48 (SATSRPPSSS) the composition is skewed to low complexity. 2 EIF4G-binding regions span residues 56-59 (HPLE) and 66-102 (FDNPSAKSKQAAWGSSIRPIYTFATVEEFWSIYNNIH). Residues 74 to 79 (KQAAWG), K106, and 124 to 125 (WE) each bind mRNA. C129 and C167 are oxidised to a cystine. Residues 150 to 159 (YTLLGMIGEQ) are EIF4G-binding. MRNA contacts are provided by residues 174 to 179 (RNRQEK) and 219 to 223 (KKHDR).

Belongs to the eukaryotic initiation factor 4E family. EIF4F is a multi-subunit complex, the composition of which varies with external and internal environmental conditions. It is composed of at least EIF4A, EIF4E and EIF4G. EIF4E is also known to interact with other partners. In higher plants two isoforms of EIF4F have been identified, named isoform EIF4F and isoform EIF(iso)4F. Isoform EIF4F has subunits p220 and p26, whereas isoform EIF(iso)4F has subunits p82 and p28. In terms of assembly, (Microbial infection) Interacts with potyvirus peanut stripe virus (PStV) helper component proteinase (HC-Pro) in the cytoplasm and with PStV viral genome-linked protein (VPg) in the nucleus; these interactions are possible in susceptible hosts but impaired in resistant plants. Post-translationally, according to the redox status, the Cys-129-Cys-167 disulfide bridge may have a role in regulating protein function by affecting its ability to bind capped mRNA. Expressed ubiquitously with highest levels in young leaves and roots, and lowest levels in flowers.

It localises to the nucleus. Its subcellular location is the cytoplasm. Functionally, component of the protein complex eIF4F, which is involved in the recognition of the mRNA cap, ATP-dependent unwinding of 5'-terminal secondary structure and recruitment of mRNA to the ribosome. Recognizes and binds the 7-methylguanosine-containing mRNA cap during an early step in the initiation of protein synthesis and facilitates ribosome binding by inducing the unwinding of the mRNAs secondary structures. Key component of recessive resistance to potyviruses such as peanut stripe virus (PStV). (Microbial infection) Susceptibility host factor required for viral infection by recruiting viral RNAs to the host ribosomal complex via an interaction with viral genome-linked protein (VPg). The chain is Eukaryotic translation initiation factor 4E-1 from Arachis hypogaea (Peanut).